The primary structure comprises 177 residues: Dual-action ribosomal maturation protein DarP (177 aa).

Positions 1-26 (MKIVGDSEHFKQPYDSDEEYVSKTED) are disordered.

This sequence belongs to the DarP family.

The protein resides in the cytoplasm. Member of a network of 50S ribosomal subunit biogenesis factors which assembles along the 30S-50S interface, preventing incorrect 23S rRNA structures from forming. Promotes peptidyl transferase center (PTC) maturation. The chain is Dual-action ribosomal maturation protein DarP from Shewanella sp. (strain ANA-3).